The primary structure comprises 119 residues: BLOC-1-related complex subunit 8 (119 aa).

The residue at position 109 (Ser109) is a Phosphoserine.

Belongs to the BORCS8 family. Component of the BLOC-one-related complex (BORC) which is composed of BLOC1S1, BLOC1S2, BORCS5, BORCS6, BORCS7, BORCS8, KXD1 and SNAPIN.

Its subcellular location is the lysosome membrane. Its function is as follows. As part of the BLOC-one-related complex (BORC), it plays a role in the movement and localization of lysosomes at the cell periphery. Associated with the cytosolic face of lysosomes, BORC recruits ARL8B to the lysosomal membrane and couples lysosomes to microtubule plus-end-directed kinesin motors, driving lysosome movement toward the cell periphery. The protein is BLOC-1-related complex subunit 8 of Homo sapiens (Human).